An 88-amino-acid polypeptide reads, in one-letter code: Small ribosomal subunit protein bS20 (88 aa).

Disordered regions lie at residues 1–22 (MPNI…AQNA) and 69–88 (KNAA…GLSA).

The protein belongs to the bacterial ribosomal protein bS20 family.

In terms of biological role, binds directly to 16S ribosomal RNA. This is Small ribosomal subunit protein bS20 from Shouchella clausii (strain KSM-K16) (Alkalihalobacillus clausii).